We begin with the raw amino-acid sequence, 495 residues long: Transcription termination/antitermination protein NusA (495 aa).

One can recognise an S1 motif domain in the interval 135 to 200; the sequence is GQIITGIVKK…RGAQLFLSRS (66 aa). One can recognise a KH domain in the interval 302 to 370; it reads HHTMDIAVDS…KNLNVSEKVI (69 aa). 2 tandem repeats follow at residues 364-414 and 439-489. Residues 364–489 are 2 X 51 AA approximate repeats; that stretch reads NVSEKVIKTL…LLIMAARNIC (126 aa).

This sequence belongs to the NusA family. In terms of assembly, monomer. Binds directly to the core enzyme of the DNA-dependent RNA polymerase and to nascent RNA.

Its subcellular location is the cytoplasm. Functionally, participates in both transcription termination and antitermination. The sequence is that of Transcription termination/antitermination protein NusA from Buchnera aphidicola subsp. Schizaphis graminum (strain Sg).